Consider the following 401-residue polypeptide: Phosphoglycerate kinase (401 aa).

Substrate contacts are provided by residues Asp20 to Asn22, Arg35, His58 to Arg61, Arg117, and Arg154. ATP is bound by residues Lys204, Gly298, Glu329, and Gly358–Ser361.

Belongs to the phosphoglycerate kinase family. In terms of assembly, monomer.

The protein localises to the cytoplasm. It catalyses the reaction (2R)-3-phosphoglycerate + ATP = (2R)-3-phospho-glyceroyl phosphate + ADP. Its pathway is carbohydrate degradation; glycolysis; pyruvate from D-glyceraldehyde 3-phosphate: step 2/5. This is Phosphoglycerate kinase from Bifidobacterium adolescentis (strain ATCC 15703 / DSM 20083 / NCTC 11814 / E194a).